The sequence spans 431 residues: Glucose-1-phosphate adenylyltransferase (431 aa).

Lysine 39 provides a ligand contact to beta-D-fructose 1,6-bisphosphate. The AMP site is built by arginine 40, histidine 46, and arginine 52. Tyrosine 114 contacts alpha-D-glucose 1-phosphate. Residue arginine 130 coordinates AMP. Residues glycine 179, 194-195 (EK), and serine 212 contribute to the alpha-D-glucose 1-phosphate site. AMP-binding residues include glutamate 370 and arginine 386. Residues 419 to 423 (REMLR) and 429 to 431 (QER) contribute to the beta-D-fructose 1,6-bisphosphate site.

The protein belongs to the bacterial/plant glucose-1-phosphate adenylyltransferase family. As to quaternary structure, homotetramer.

The catalysed reaction is alpha-D-glucose 1-phosphate + ATP + H(+) = ADP-alpha-D-glucose + diphosphate. It functions in the pathway glycan biosynthesis; glycogen biosynthesis. Allosterically activated by fructose-1,6-bisphosphate (F16BP) and inhibited by AMP. Involved in the biosynthesis of ADP-glucose, a building block required for the elongation reactions to produce glycogen. Catalyzes the reaction between ATP and alpha-D-glucose 1-phosphate (G1P) to produce pyrophosphate and ADP-Glc. This chain is Glucose-1-phosphate adenylyltransferase, found in Escherichia coli O7:K1 (strain IAI39 / ExPEC).